Consider the following 293-residue polypeptide: Putative DNA glycosylase At3g47830 (293 aa).

Over residues 1–10 (MSKAQKRKRL) the composition is skewed to basic residues. The interval 1 to 34 (MSKAQKRKRLNKYDGESKTPANKSTVDGGNPYPT) is disordered. N108 and K151 together coordinate DNA. Residue K196 is the Schiff-base intermediate with DNA of the active site. DNA-binding residues include H216 and D232.

Belongs to the DNA glycosylase family.

This chain is Putative DNA glycosylase At3g47830, found in Arabidopsis thaliana (Mouse-ear cress).